A 396-amino-acid polypeptide reads, in one-letter code: Acetate kinase (396 aa).

Asparagine 7 is a binding site for Mg(2+). Lysine 14 serves as a coordination point for ATP. A substrate-binding site is contributed by arginine 86. Aspartate 143 serves as the catalytic Proton donor/acceptor. ATP-binding positions include 203–207 (HLGNG), 277–279 (DMR), and 325–329 (GIGEH). Glutamate 380 is a binding site for Mg(2+).

This sequence belongs to the acetokinase family. As to quaternary structure, homodimer. It depends on Mg(2+) as a cofactor. Requires Mn(2+) as cofactor.

The protein resides in the cytoplasm. It catalyses the reaction acetate + ATP = acetyl phosphate + ADP. The protein operates within metabolic intermediate biosynthesis; acetyl-CoA biosynthesis; acetyl-CoA from acetate: step 1/2. Its function is as follows. Catalyzes the formation of acetyl phosphate from acetate and ATP. Can also catalyze the reverse reaction. This Sulfurovum sp. (strain NBC37-1) protein is Acetate kinase.